The primary structure comprises 279 residues: uncharacterized protein (279 aa).

This is an uncharacterized protein from Acanthamoeba polyphaga (Amoeba).